The primary structure comprises 302 residues: Quinolinate synthase (302 aa).

Iminosuccinate-binding residues include histidine 24 and serine 41. Cysteine 86 is a binding site for [4Fe-4S] cluster. Iminosuccinate is bound by residues 112–114 (YVN) and serine 129. Cysteine 171 is a [4Fe-4S] cluster binding site. Iminosuccinate-binding positions include 197 to 199 (HPE) and threonine 214. Cysteine 259 contributes to the [4Fe-4S] cluster binding site.

It belongs to the quinolinate synthase family. Type 2 subfamily. [4Fe-4S] cluster serves as cofactor.

It localises to the cytoplasm. It catalyses the reaction iminosuccinate + dihydroxyacetone phosphate = quinolinate + phosphate + 2 H2O + H(+). Its pathway is cofactor biosynthesis; NAD(+) biosynthesis; quinolinate from iminoaspartate: step 1/1. Functionally, catalyzes the condensation of iminoaspartate with dihydroxyacetone phosphate to form quinolinate. In Dehalococcoides mccartyi (strain ATCC BAA-2100 / JCM 16839 / KCTC 5957 / BAV1), this protein is Quinolinate synthase.